The sequence spans 420 residues: Deoxyribodipyrimidine photo-lyase (420 aa).

Residues 2-124 form the Photolyase/cryptochrome alpha/beta domain; the sequence is GPLLVWHRGD…PLHLLPAPHL (123 aa). Positions 152–175 are disordered; it reads APEALPKGPEEGEIPREDPGLPLP. The span at 159–170 shows a compositional bias: basic and acidic residues; it reads GPEEGEIPREDP. Tyr-197 is an FAD binding site. Residue Arg-201 participates in DNA binding. 209-213 contacts FAD; it reads GSRLS. 2 interaction with DNA regions span residues 244-251 and 310-311; these read ELLWRDFS and NR. 341–343 is an FAD binding site; the sequence is DGD. Position 373 (Gln-373) interacts with DNA.

This sequence belongs to the DNA photolyase class-1 family. Monomer. It depends on FAD as a cofactor.

It catalyses the reaction cyclobutadipyrimidine (in DNA) = 2 pyrimidine residues (in DNA).. Its function is as follows. Involved in repair of UV radiation-induced DNA damage. Catalyzes the light-dependent monomerization (300-600 nm) of cyclobutyl pyrimidine dimers (in cis-syn configuration), which are formed between adjacent bases on the same DNA strand upon exposure to ultraviolet radiation. This Thermus thermophilus (strain ATCC BAA-163 / DSM 7039 / HB27) protein is Deoxyribodipyrimidine photo-lyase (phr).